A 389-amino-acid polypeptide reads, in one-letter code: MANVSFTFDSQEQNKELRPSRLVGRSDERNGRRQGTEQKKKEKEDSGFRVSEEGEIPLQQGSNTDSYARDDLTQQQRVSDVVMQRRSHETESRLWQRARTQDRRGSESRMMFDGRTQWSHAPVLSSAYPVRPGEDNCLFYMKNHLCEWGSECCYNHPPLQEIPCRIGKKLDCKAGACKRGSNCPFNHPKERDGDSLPMPQGRTPDLRRNDSGRRYNTESRSWPENKEKEVGQFRDHQDSKEDAQEVLLQQRPRDVEMRKRSRSPDFRAKTETKEHREAEERSSRESATATGKVSGKENELRPTYVYLLMMPENHNVDVQQTLQEQRKRNIKKARIEARLKLDQIRPTVVLENSRATKMMIEWGFTDFRKLQGSNLGNKKWICWVRKHCC.

The segment covering 1 to 11 (MANVSFTFDSQ) has biased composition (polar residues). The disordered stretch occupies residues 1-110 (MANVSFTFDS…QDRRGSESRM (110 aa)). Composition is skewed to basic and acidic residues over residues 12-52 (EQNK…RVSE) and 86-110 (RSHE…ESRM). 2 consecutive C3H1-type zinc fingers follow at residues 131–157 (RPGE…YNHP) and 158–190 (PLQE…HPKE). A disordered region spans residues 183–296 (CPFNHPKERD…ATATGKVSGK (114 aa)). 2 stretches are compositionally biased toward basic and acidic residues: residues 204–243 (PDLR…KEDA) and 251–284 (RPRD…RSSR).

The protein is Putative zinc finger CCCH domain-containing protein 10 of Arabidopsis thaliana (Mouse-ear cress).